A 931-amino-acid polypeptide reads, in one-letter code: G patch domain-containing protein 1 (931 aa).

Acidic residues predominate over residues 1–12 (MAALDSDSDEDL). Disordered regions lie at residues 1–41 (MAAL…TVRD), 72–92 (TPSSFVSSRQNRADKSVLGPE), and 169–213 (QGIG…YLPE). N-acetylalanine is present on A2. S6 and S8 each carry phosphoserine. Residues 72–81 (TPSSFVSSRQ) are compositionally biased toward polar residues. Positions 152 to 198 (KLSVGFELLRKMGWKEGQGIGPRVKRRPRRQKPDPGVKIYGCALPPG) constitute a G-patch domain. Positions 202–211 (GSEDEDDDYL) are enriched in acidic residues. A Glycyl lysine isopeptide (Lys-Gly) (interchain with G-Cter in SUMO2) cross-link involves residue K313. S358 and S479 each carry phosphoserine. Disordered stretches follow at residues 567–594 (SRFTHAQEEDDSEQVEVPRDQENDVSDK) and 659–931 (SPVT…LRRQ). The segment covering 582–593 (EVPRDQENDVSD) has biased composition (basic and acidic residues). Polar residues predominate over residues 659–668 (SPVTQASSEK). Residues 669 to 695 (VAQHRASDKSRKPSRWDTSKEEKKEDS) are compositionally biased toward basic and acidic residues. S715 is subject to Phosphoserine. The segment covering 769 to 780 (SEDEQGDSEDDQ) has biased composition (acidic residues). The segment covering 781–792 (EGTREADFKSSQ) has biased composition (basic and acidic residues). The segment covering 852–888 (EKHKKNKEKHKTKKEHRRKKEKKKKHRKHKHKGKQKN) has biased composition (basic residues). Low complexity predominate over residues 896–905 (SSESTDSSDS). Over residues 922–931 (RLKRLPLRRQ) the composition is skewed to basic residues.

This sequence belongs to the GPATCH1 family.

The chain is G patch domain-containing protein 1 (GPATCH1) from Bos taurus (Bovine).